The primary structure comprises 577 residues: Proline--tRNA ligase (577 aa).

It belongs to the class-II aminoacyl-tRNA synthetase family. ProS type 1 subfamily. As to quaternary structure, homodimer.

It is found in the cytoplasm. It catalyses the reaction tRNA(Pro) + L-proline + ATP = L-prolyl-tRNA(Pro) + AMP + diphosphate. In terms of biological role, catalyzes the attachment of proline to tRNA(Pro) in a two-step reaction: proline is first activated by ATP to form Pro-AMP and then transferred to the acceptor end of tRNA(Pro). As ProRS can inadvertently accommodate and process non-cognate amino acids such as alanine and cysteine, to avoid such errors it has two additional distinct editing activities against alanine. One activity is designated as 'pretransfer' editing and involves the tRNA(Pro)-independent hydrolysis of activated Ala-AMP. The other activity is designated 'posttransfer' editing and involves deacylation of mischarged Ala-tRNA(Pro). The misacylated Cys-tRNA(Pro) is not edited by ProRS. The polypeptide is Proline--tRNA ligase (Thermotoga neapolitana (strain ATCC 49049 / DSM 4359 / NBRC 107923 / NS-E)).